The following is a 599-amino-acid chain: Dual specificity tyrosine-phosphorylation-regulated kinase 2 (599 aa).

A disordered region spans residues 1-55 (MLTRKPSAAAPAAYPTGRGGDTAVRQLQASPGIGAGAPRSGVGTGPPSPIALPPL). S30 is modified (phosphoserine). Position 104 is a phosphothreonine; by ATM (T104). Positions 187–189 (KKR) match the Nuclear localization signal motif. The 314-residue stretch at 220 to 533 (YEVLKVIGKG…PGQALRHPWL (314 aa)) folds into the Protein kinase domain. Residues 226 to 234 (IGKGSFGQV), K249, and 299 to 302 (FELL) each bind ATP. The Proton acceptor role is filled by D346. T379 bears the Phosphothreonine; by MAP3K10 mark. Y380 carries the post-translational modification Phosphotyrosine; by autocatalysis. Phosphoserine; by ATM is present on S440. S447 bears the Phosphoserine; by MAP3K10 mark.

The protein belongs to the protein kinase superfamily. CMGC Ser/Thr protein kinase family. MNB/DYRK subfamily. As to quaternary structure, component of an E3 ligase complex containing DYRK2, EDD/UBR5, DDB1 and DCAF1 (EDVP complex). Interacts directly with EDD/UBR5, DDB1 and DCAF1. Interacts with SIAH2 and MDM2. Interacts with MAP3K10 and NFATC1. May also interact with CCNL2. Requires Mg(2+) as cofactor. It depends on Mn(2+) as a cofactor. Post-translationally, autophosphorylates cotranslationally on the second tyrosine residue in the Tyr-X-Tyr motif in the activation loop, but once mature, does not have any protein tyrosine kinase activity. Phosphorylated at Thr-104 and Ser-440 by ATM in response to genotoxic stress. Under normal conditions, polyubiquitinated in the nucleus by MDM2, leading to its proteasomal degradation. Phosphorylation on Thr-104 and Ser-440 by ATM in response to genotoxic stress disrupts MDM2 binding and prevents MDM2-mediated ubiquitination and subsequent proteasomal degradation. Polyubiquitinated by SIAH2, leading to its proteasomal degradation. Polyubiquitinated by SIAH2 occurs under normal conditions, and is enhanced in response to hypoxia.

Its subcellular location is the cytoplasm. It is found in the nucleus. It carries out the reaction L-seryl-[protein] + ATP = O-phospho-L-seryl-[protein] + ADP + H(+). It catalyses the reaction L-threonyl-[protein] + ATP = O-phospho-L-threonyl-[protein] + ADP + H(+). The catalysed reaction is L-tyrosyl-[protein] + ATP = O-phospho-L-tyrosyl-[protein] + ADP + H(+). Activated by autophosphorylation on the second tyrosine residue in the Tyr-X-Tyr motif in the activation loop. In terms of biological role, serine/threonine-protein kinase involved in the regulation of the mitotic cell cycle, cell proliferation, apoptosis, organization of the cytoskeleton and neurite outgrowth. Functions in part via its role in ubiquitin-dependent proteasomal protein degradation. Functions downstream of ATM and phosphorylates p53/TP53 at 'Ser-46', and thereby contributes to the induction of apoptosis in response to DNA damage. Phosphorylates NFATC1, and thereby inhibits its accumulation in the nucleus and its transcription factor activity. Phosphorylates EIF2B5 at 'Ser-544', enabling its subsequent phosphorylation and inhibition by GSK3B. Likewise, phosphorylation of NFATC1, CRMP2/DPYSL2 and CRMP4/DPYSL3 promotes their subsequent phosphorylation by GSK3B. May play a general role in the priming of GSK3 substrates. Inactivates GYS1 by phosphorylation at 'Ser-641', and potentially also a second phosphorylation site, thus regulating glycogen synthesis. Mediates EDVP E3 ligase complex formation and is required for the phosphorylation and subsequent degradation of KATNA1. Phosphorylates TERT at 'Ser-457', promoting TERT ubiquitination by the EDVP complex. Phosphorylates SIAH2, and thereby increases its ubiquitin ligase activity. Promotes the proteasomal degradation of MYC and JUN, and thereby regulates progress through the mitotic cell cycle and cell proliferation. Promotes proteasomal degradation of GLI2 and GLI3, and thereby plays a role in smoothened and sonic hedgehog signaling. Phosphorylates CRMP2/DPYSL2, CRMP4/DPYSL3, DCX, EIF2B5, EIF4EBP1, GLI2, GLI3, GYS1, JUN, MDM2, MYC, NFATC1, p53/TP53, TAU/MAPT and KATNA1. Can phosphorylate histone H1, histone H3 and histone H2B (in vitro). Can phosphorylate CARHSP1 (in vitro). Plays a role in cytoskeleton organization and neurite outgrowth via its phosphorylation of DCX. This chain is Dual specificity tyrosine-phosphorylation-regulated kinase 2, found in Mus musculus (Mouse).